The following is a 237-amino-acid chain: Large ribosomal subunit protein uL1 (237 aa).

This sequence belongs to the universal ribosomal protein uL1 family. Part of the 50S ribosomal subunit.

Functionally, binds directly to 23S rRNA. The L1 stalk is quite mobile in the ribosome, and is involved in E site tRNA release. Its function is as follows. Protein L1 is also a translational repressor protein, it controls the translation of the L11 operon by binding to its mRNA. This chain is Large ribosomal subunit protein uL1, found in Dehalococcoides mccartyi (strain CBDB1).